A 438-amino-acid polypeptide reads, in one-letter code: Citrate synthase (438 aa).

Active-site residues include H306 and D364.

Belongs to the citrate synthase family.

The enzyme catalyses oxaloacetate + acetyl-CoA + H2O = citrate + CoA + H(+). It functions in the pathway carbohydrate metabolism; tricarboxylic acid cycle; isocitrate from oxaloacetate: step 1/2. This chain is Citrate synthase (gltA), found in Bartonella quintana (strain Toulouse) (Rochalimaea quintana).